The chain runs to 591 residues: Protein kinase C zeta type (591 aa).

One can recognise a PB1 domain in the interval 15 to 98 (RVRLKAHYSG…DGLILHVFPS (84 aa)). The tract at residues 79–145 (AFRLAGQHRD…KRFNRRAYCG (67 aa)) is interaction with SQSTM1. Residues 130-180 (GHLFQAKRFNRRAYCGQCSERIWGLARQGYRCINCKLLVHKRCHGLVPLTC) form a Phorbol-ester/DAG-type zinc finger. The 267-residue stretch at 251 to 517 (FDLIRVIGRG…FSDIKSHAFF (267 aa)) folds into the Protein kinase domain. ATP contacts are provided by residues 257 to 265 (IGRGSYAKV) and Lys-280. The Proton acceptor role is filled by Asp-375. Thr-409 carries the phosphothreonine; by PDPK1 and PI3K modification. An AGC-kinase C-terminal domain is found at 518 to 589 (RSIDWDLLEK…INPLLLSTEE (72 aa)). Thr-559 is subject to Phosphothreonine. Ser-590 bears the Phosphoserine mark.

This sequence belongs to the protein kinase superfamily. AGC Ser/Thr protein kinase family. PKC subfamily. As to quaternary structure, interacts with PARD6A, PARD6B and PARD6G. Part of a complex with PARD3, PARD6A or PARD6B or PARD6G and CDC42 or RAC1. Interacts with ADAP1/CENTA1. Interacts directly with SQSTM1. Forms a ternary complex with SQSTM1 and KCNAB2. Forms another ternary complex with SQSTM1 and GABRR3. Forms a complex with SQSTM1 and MAP2K5. Interacts (via the protein kinase domain) with WWC1. Forms a tripartite complex with WWC1 and DDR1, but predominantly in the absence of collagen. Component of the Par polarity complex, composed of at least phosphorylated PRKCZ, PARD3 and TIAM1. Interacts with PDPK1 (via N-terminal region). Interacts with WDFY2 (via WD repeats 1-3). Interacts with VAMP2. Forms a complex with WDFY2 and VAMP2. Interacts with APPL1. Interacts with WWC1, WWC2 and WWC3. Post-translationally, CDH5 is required for its phosphorylation at Thr-409. Phosphorylated by protein kinase PDPK1; phosphorylation is inhibited by the apoptotic C-terminal cleavage product of PKN2. Phosphorylation at Thr-409 by PI3K activates the kinase.

Its subcellular location is the cytoplasm. The protein resides in the endosome. It is found in the cell junction. It localises to the membrane. It catalyses the reaction L-seryl-[protein] + ATP = O-phospho-L-seryl-[protein] + ADP + H(+). The enzyme catalyses L-threonyl-[protein] + ATP = O-phospho-L-threonyl-[protein] + ADP + H(+). Atypical PKCs (PRKCI and PRKCZ) exhibit an elevated basal enzymatic activity (that may be due to the interaction with SMG1 or SQSTM1) and are not regulated by diacylglycerol, phosphatidylserine, phorbol esters or calcium ions. Two specific sites, Thr-409 (activation loop of the kinase domain) and Thr-559 (turn motif), need to be phosphorylated for its full activation. Phosphatidylinositol 3,4,5-trisphosphate might be a physiological activator. Its function is as follows. Calcium- and diacylglycerol-independent serine/threonine-protein kinase that functions in phosphatidylinositol 3-kinase (PI3K) pathway and mitogen-activated protein (MAP) kinase cascade, and is involved in NF-kappa-B activation, mitogenic signaling, cell proliferation, cell polarity, inflammatory response and maintenance of long-term potentiation (LTP). Upon lipopolysaccharide (LPS) treatment in macrophages, or following mitogenic stimuli, functions downstream of PI3K to activate MAP2K1/MEK1-MAPK1/ERK2 signaling cascade independently of RAF1 activation. Required for insulin-dependent activation of AKT3, but may function as an adapter rather than a direct activator. Upon insulin treatment may act as a downstream effector of PI3K and contribute to the activation of translocation of the glucose transporter SLC2A4/GLUT4 and subsequent glucose transport in adipocytes. In EGF-induced cells, binds and activates MAP2K5/MEK5-MAPK7/ERK5 independently of its kinase activity and can activate JUN promoter through MEF2C. Through binding with SQSTM1/p62, functions in interleukin-1 signaling and activation of NF-kappa-B with the specific adapters RIPK1 and TRAF6. Participates in TNF-dependent transactivation of NF-kappa-B by phosphorylating and activating IKBKB kinase, which in turn leads to the degradation of NF-kappa-B inhibitors. In migrating astrocytes, forms a cytoplasmic complex with PARD6A and is recruited by CDC42 to function in the establishment of cell polarity along with the microtubule motor and dynein. In association with FEZ1, stimulates neuronal differentiation in PC12 cells. In the inflammatory response, is required for the T-helper 2 (Th2) differentiation process, including interleukin production, efficient activation of JAK1 and the subsequent phosphorylation and nuclear translocation of STAT6. May be involved in development of allergic airway inflammation (asthma), a process dependent on Th2 immune response. In the NF-kappa-B-mediated inflammatory response, can relieve SETD6-dependent repression of NF-kappa-B target genes by phosphorylating the RELA subunit at 'Ser-311'. Phosphorylates VAMP2 in vitro. Phosphorylates and activates LRRK1, which phosphorylates RAB proteins involved in intracellular trafficking. In Oryctolagus cuniculus (Rabbit), this protein is Protein kinase C zeta type (PRKCZ).